The following is a 240-amino-acid chain: Ribonuclease P protein component (240 aa).

The disordered stretch occupies residues 1–140 (MDEKDLATQQ…KKAGGKGLVS (140 aa)). Positions 40–51 (APPPHRVIPPHP) are enriched in pro residues. Residues 47 to 123 (IPPHPGLRQD…PGPDRDGGSK (77 aa)) form an insert region. Over residues 122-132 (SKASRASSPKK) the composition is skewed to low complexity.

This sequence belongs to the RnpA family. As to quaternary structure, consists of a catalytic RNA component (M1 or rnpB) and a protein subunit.

It catalyses the reaction Endonucleolytic cleavage of RNA, removing 5'-extranucleotides from tRNA precursor.. RNaseP catalyzes the removal of the 5'-leader sequence from pre-tRNA to produce the mature 5'-terminus. It can also cleave other RNA substrates such as 4.5S RNA. The protein component plays an auxiliary but essential role in vivo by binding to the 5'-leader sequence and broadening the substrate specificity of the ribozyme. In Thermus filiformis, this protein is Ribonuclease P protein component.